A 416-amino-acid chain; its full sequence is Protein MID1-COMPLEMENTING ACTIVITY 2 (416 aa).

Residues 191-219 (CEALKTEEEKLQLELQRSRARYDADQCEV) are a coiled coil. The chain crosses the membrane as a helical span at residues 338–354 (LIVYSLILSCCCYTCCI).

In terms of tissue distribution, expressed in roots, leaves, stems, flowers and siliques. In the root, high levels of expression in vascular tissues, in the stele and endodermis, but no expression in the cortex, epidermis, root cap, promeristem and adjacent elongation zone of the primary root. Not expressed in root hairs. Detected in shoot apical meristem, leaf mesophyll cells and vascular tissues, upper half of inflorescence, but not in petioles of rosette leaves.

The protein resides in the cell membrane. With respect to regulation, inhibited by GdCl(3), but not by verapamil. In terms of biological role, calcium-permeable stretch-activated channel component. Probably involved in mechanosensing and in mechano-stimulated calcium uptake mechanism. The sequence is that of Protein MID1-COMPLEMENTING ACTIVITY 2 (MCA2) from Arabidopsis thaliana (Mouse-ear cress).